A 394-amino-acid chain; its full sequence is ATP-dependent RNA helicase fal1 (394 aa).

Residues 21–49 (SSFEEMNLKEDLLRGIYAYGYETPSAVQS) carry the Q motif motif. The Helicase ATP-binding domain maps to 52–222 (IIQICKGRDV…NKFTTNPVRI (171 aa)). 65-72 (AQSGTGKT) contacts ATP. Phosphoserine is present on Ser-67. Positions 170–173 (DEAD) match the DEAD box motif. One can recognise a Helicase C-terminal domain in the interval 233–394 (GLKQYFIAVE…EMPMNIGDMV (162 aa)).

It belongs to the DEAD box helicase family. DDX48/FAL1 subfamily.

It is found in the nucleus. Its subcellular location is the nucleolus. The enzyme catalyses ATP + H2O = ADP + phosphate + H(+). In terms of biological role, ATP-dependent RNA helicase involved in 40S ribosomal subunit biogenesis. Required for the processing and cleavage of 35S pre-rRNA at sites A0, A1, and A2, leading to mature 18S rRNA. The polypeptide is ATP-dependent RNA helicase fal1 (tif412) (Schizosaccharomyces pombe (strain 972 / ATCC 24843) (Fission yeast)).